The sequence spans 209 residues: Large ribosomal subunit protein uL3 (209 aa).

The interval 127–151 (SGGPSSHGSKFHRHLGGTGQATTPA) is disordered.

It belongs to the universal ribosomal protein uL3 family. Part of the 50S ribosomal subunit. Forms a cluster with proteins L14 and L19.

Functionally, one of the primary rRNA binding proteins, it binds directly near the 3'-end of the 23S rRNA, where it nucleates assembly of the 50S subunit. This Borrelia turicatae (strain 91E135) protein is Large ribosomal subunit protein uL3.